A 507-amino-acid polypeptide reads, in one-letter code: Tryptamine 4-monooxygenase (507 aa).

A signal peptide spans 1 to 19 (MIVLLVSLVLAGCIYYANA). The disordered stretch occupies residues 403 to 425 (PNPSEFRPERYLSSDGKPDPTVR). Over residues 408–425 (FRPERYLSSDGKPDPTVR) the composition is skewed to basic and acidic residues. Heme is bound at residue cysteine 439.

Belongs to the cytochrome P450 family. Heme is required as a cofactor.

It carries out the reaction tryptamine + AH2 + O2 = 4-hydroxytryptamine + A + H2O. It participates in secondary metabolite biosynthesis. Its function is as follows. Tryptamine 4-monooxygenase; part of the gene cluster that mediates the biosynthesis of psilocybin, a psychotropic tryptamine-derived natural product. The first step in the pathway is the decarboxylation of L-tryptophan to tryptamine by the decarboxylase psiD. PsiD does not decarboxylate phenylalanine, tyrosine, or 5-hydroxy- L -tryptophan (5-HTP). 4-hydroxy-L-tryptophan is accepted as substrate by psiD as well. The cytochrome P450 monooxygenase psiH then converts tryptamine to 4-hydroxytryptamine. The kinase psiK catalyzes the 4-O-phosphorylation step by converting 4-hydroxytryptamine into norbaeocystin. The methyltransferase psiM then catalyzes iterative methyl transfer to the amino group of norbaeocystin to yield psilocybin via a monomethylated intermediate, baeocystin. The sequence is that of Tryptamine 4-monooxygenase from Psilocybe cyanescens.